The primary structure comprises 315 residues: ADP-L-glycero-D-manno-heptose-6-epimerase (315 aa).

NADP(+)-binding positions include 10–11, 31–32, K38, K53, 76–80, and N93; these read FI, DD, and QGACS. Residue Y140 is the Proton acceptor of the active site. K144 contributes to the NADP(+) binding site. N169 is a binding site for substrate. Positions 170 and 178 each coordinate NADP(+). K178 functions as the Proton acceptor in the catalytic mechanism. Substrate is bound by residues S180, H187, 201 to 204, R214, and Y278; that span reads FEGC.

Belongs to the NAD(P)-dependent epimerase/dehydratase family. HldD subfamily. As to quaternary structure, homopentamer. It depends on NADP(+) as a cofactor.

The catalysed reaction is ADP-D-glycero-beta-D-manno-heptose = ADP-L-glycero-beta-D-manno-heptose. The protein operates within nucleotide-sugar biosynthesis; ADP-L-glycero-beta-D-manno-heptose biosynthesis; ADP-L-glycero-beta-D-manno-heptose from D-glycero-beta-D-manno-heptose 7-phosphate: step 4/4. Catalyzes the interconversion between ADP-D-glycero-beta-D-manno-heptose and ADP-L-glycero-beta-D-manno-heptose via an epimerization at carbon 6 of the heptose. This chain is ADP-L-glycero-D-manno-heptose-6-epimerase, found in Syntrophotalea carbinolica (strain DSM 2380 / NBRC 103641 / GraBd1) (Pelobacter carbinolicus).